We begin with the raw amino-acid sequence, 349 residues long: Peroxidase 7 (349 aa).

Positions 1–22 (MKLAVVSVVVILGVLVAWPVSA) are cleaved as a signal peptide. 4 cysteine pairs are disulfide-bonded: cysteine 60/cysteine 136, cysteine 93/cysteine 98, cysteine 142/cysteine 341, and cysteine 220/cysteine 252. The active-site Proton acceptor is the histidine 91. Ca(2+) is bound by residues aspartate 92, valine 95, glycine 97, aspartate 99, and serine 101. Residue proline 183 participates in substrate binding. Histidine 213 lines the heme b pocket. Threonine 214 contributes to the Ca(2+) binding site. Residue asparagine 231 is glycosylated (N-linked (GlcNAc...) asparagine). Ca(2+) contacts are provided by aspartate 262, threonine 265, and aspartate 270.

It belongs to the peroxidase family. Classical plant (class III) peroxidase subfamily. Heme b is required as a cofactor. Ca(2+) serves as cofactor.

It localises to the secreted. The enzyme catalyses 2 a phenolic donor + H2O2 = 2 a phenolic radical donor + 2 H2O. In terms of biological role, removal of H(2)O(2), oxidation of toxic reductants, biosynthesis and degradation of lignin, suberization, auxin catabolism, response to environmental stresses such as wounding, pathogen attack and oxidative stress. These functions might be dependent on each isozyme/isoform in each plant tissue. The sequence is that of Peroxidase 7 (PER7) from Arabidopsis thaliana (Mouse-ear cress).